We begin with the raw amino-acid sequence, 669 residues long: DNA ligase (669 aa).

35-39 (DFEYD) lines the NAD(+) pocket. Residues 52 to 71 (YPEWDSPDSPTHRVGSDKTE) form a disordered region. A compositionally biased stretch (basic and acidic residues) spans 61 to 71 (PTHRVGSDKTE). Residues 84 to 85 (SL) and glutamate 115 each bind NAD(+). Catalysis depends on lysine 117, which acts as the N6-AMP-lysine intermediate. NAD(+) is bound by residues arginine 138, glutamate 175, lysine 290, and lysine 314. Residues cysteine 408, cysteine 411, cysteine 426, and cysteine 432 each contribute to the Zn(2+) site. The BRCT domain occupies 590–669 (AVSNRLAGKT…EEEFLRLIEE (80 aa)).

This sequence belongs to the NAD-dependent DNA ligase family. LigA subfamily. Mg(2+) is required as a cofactor. Requires Mn(2+) as cofactor.

It carries out the reaction NAD(+) + (deoxyribonucleotide)n-3'-hydroxyl + 5'-phospho-(deoxyribonucleotide)m = (deoxyribonucleotide)n+m + AMP + beta-nicotinamide D-nucleotide.. DNA ligase that catalyzes the formation of phosphodiester linkages between 5'-phosphoryl and 3'-hydroxyl groups in double-stranded DNA using NAD as a coenzyme and as the energy source for the reaction. It is essential for DNA replication and repair of damaged DNA. This Porphyromonas gingivalis (strain ATCC BAA-308 / W83) protein is DNA ligase.